The chain runs to 221 residues: MVSFSSLALALSTVVGVLAAPGSEKYVELAKHQLTHSQTGTKNGYYYSFWTDNRGQVSYTNGKGGQYSVNWKDCGNFVAGKGWNPASAKTVTYSGNWKPSGNSYVSVYGWTQNPLIEFYIVESFGSYNPSTGATELGTVESDGGTYKIYKTKRVDAPSIEGKKTFDQFWSVRTSHRVGGTVTTKNHFNAWAKSGLKLGTFNYMILATEGYHSSGSATMTVS.

The first 19 residues, 1 to 19 (MVSFSSLALALSTVVGVLA), serve as a signal peptide directing secretion. One can recognise a GH11 domain in the interval 33–221 (QLTHSQTGTK…SSGSATMTVS (189 aa)). Residue glutamate 117 is the Nucleophile of the active site. The active-site Proton donor is glutamate 208.

Belongs to the glycosyl hydrolase 11 (cellulase G) family.

The protein resides in the secreted. It catalyses the reaction Endohydrolysis of (1-&gt;4)-beta-D-xylosidic linkages in xylans.. The protein operates within glycan degradation; xylan degradation. In terms of biological role, endo-1,4-beta-xylanase involved in the hydrolysis of xylan, a major structural heterogeneous polysaccharide found in plant biomass representing the second most abundant polysaccharide in the biosphere, after cellulose. The polypeptide is Probable endo-1,4-beta-xylanase B (xlnB) (Aspergillus clavatus (strain ATCC 1007 / CBS 513.65 / DSM 816 / NCTC 3887 / NRRL 1 / QM 1276 / 107)).